The following is a 187-amino-acid chain: Elongation factor P (187 aa).

It belongs to the elongation factor P family.

The protein resides in the cytoplasm. The protein operates within protein biosynthesis; polypeptide chain elongation. Involved in peptide bond synthesis. Stimulates efficient translation and peptide-bond synthesis on native or reconstituted 70S ribosomes in vitro. Probably functions indirectly by altering the affinity of the ribosome for aminoacyl-tRNA, thus increasing their reactivity as acceptors for peptidyl transferase. This Corynebacterium aurimucosum (strain ATCC 700975 / DSM 44827 / CIP 107346 / CN-1) (Corynebacterium nigricans) protein is Elongation factor P.